Here is a 155-residue protein sequence, read N- to C-terminus: Ribonuclease H (155 aa).

Positions 4-146 (NIDVVEIYTD…CDRLATEQIK (143 aa)) constitute an RNase H type-1 domain. Positions 13, 51, 73, and 138 each coordinate Mg(2+).

Belongs to the RNase H family. Monomer. It depends on Mg(2+) as a cofactor.

The protein resides in the cytoplasm. The catalysed reaction is Endonucleolytic cleavage to 5'-phosphomonoester.. Endonuclease that specifically degrades the RNA of RNA-DNA hybrids. The chain is Ribonuclease H from Thermoanaerobacter pseudethanolicus (strain ATCC 33223 / 39E) (Clostridium thermohydrosulfuricum).